Consider the following 386-residue polypeptide: Phosphoglycerate kinase (386 aa).

Residues 21–23, Arg-36, 59–62, Arg-112, and Arg-145 each bind substrate; these read DLN and HLGR. ATP contacts are provided by residues Lys-196, Glu-313, and 339 to 342; that span reads GGDT.

It belongs to the phosphoglycerate kinase family. In terms of assembly, monomer.

It is found in the cytoplasm. It catalyses the reaction (2R)-3-phosphoglycerate + ATP = (2R)-3-phospho-glyceroyl phosphate + ADP. It participates in carbohydrate degradation; glycolysis; pyruvate from D-glyceraldehyde 3-phosphate: step 2/5. In Haemophilus influenzae (strain ATCC 51907 / DSM 11121 / KW20 / Rd), this protein is Phosphoglycerate kinase (pgk).